A 222-amino-acid chain; its full sequence is Peptidyl-prolyl cis-trans isomerase FKBP7 (222 aa).

The signal sequence occupies residues 1–23; sequence MPKTMHFLFRFIVFFYLWGLFTA. The N-linked (GlcNAc...) asparagine glycan is linked to N45. One can recognise a PPIase FKBP-type domain in the interval 53–145; that stretch reads GDLLNAHYDG…IFEIELYAVT (93 aa). EF-hand domains follow at residues 145–180 and 189–222; these read TKGP…EFEK and YQDA…HDEL. 9 residues coordinate Ca(2+): D158, D160, D162, Q164, E169, D202, D204, D206, and E213. A Prevents secretion from ER motif is present at residues 219-222; the sequence is HDEL.

Post-translationally, glycosylated.

It is found in the endoplasmic reticulum lumen. The catalysed reaction is [protein]-peptidylproline (omega=180) = [protein]-peptidylproline (omega=0). Functionally, PPIases accelerate the folding of proteins during protein synthesis. The protein is Peptidyl-prolyl cis-trans isomerase FKBP7 (FKBP7) of Pongo abelii (Sumatran orangutan).